We begin with the raw amino-acid sequence, 198 residues long: Probable GTP-binding protein EngB (198 aa).

Residues 22–195 form the EngB-type G domain; the sequence is HRNEVAFVGR…IDKLFLEFAT (174 aa). GTP contacts are provided by residues 30-37, 57-61, 75-78, 142-145, and 174-176; these read GRSNVGKS, GKTRL, DLPG, TKSD, and YSS. 2 residues coordinate Mg(2+): Ser37 and Thr59.

It belongs to the TRAFAC class TrmE-Era-EngA-EngB-Septin-like GTPase superfamily. EngB GTPase family. Requires Mg(2+) as cofactor.

Functionally, necessary for normal cell division and for the maintenance of normal septation. The sequence is that of Probable GTP-binding protein EngB from Clostridium botulinum (strain Eklund 17B / Type B).